Consider the following 451-residue polypeptide: Nicotinamide phosphoribosyltransferase (451 aa).

Position 209 (arginine 209) interacts with diphosphate. Residue aspartate 232 coordinates beta-nicotinamide D-ribonucleotide. Diphosphate-binding residues include histidine 248 and arginine 309. Beta-nicotinamide D-ribonucleotide-binding positions include 309–311 (RPD), 364–365 (GD), and arginine 403.

This sequence belongs to the NAPRTase family.

It catalyses the reaction beta-nicotinamide D-ribonucleotide + diphosphate = 5-phospho-alpha-D-ribose 1-diphosphate + nicotinamide + H(+). Its pathway is cofactor biosynthesis; NAD(+) biosynthesis; nicotinamide D-ribonucleotide from 5-phospho-alpha-D-ribose 1-diphosphate and nicotinamide: step 1/1. In terms of biological role, catalyzes the condensation of nicotinamide with 5-phosphoribosyl-1-pyrophosphate to yield nicotinamide mononucleotide, an intermediate in the biosynthesis of NAD. This chain is Nicotinamide phosphoribosyltransferase, found in Mycoplasma pneumoniae (strain ATCC 29342 / M129 / Subtype 1) (Mycoplasmoides pneumoniae).